Here is a 273-residue protein sequence, read N- to C-terminus: Dermonecrotic toxin LhSicTox-alphaIA2biii (273 aa).

His-5 is an active-site residue. Mg(2+) contacts are provided by Glu-25 and Asp-27. The Nucleophile role is filled by His-41. Intrachain disulfides connect Cys-45–Cys-51 and Cys-47–Cys-190. A Mg(2+)-binding site is contributed by Asp-85.

It belongs to the arthropod phospholipase D family. Class II subfamily. Mg(2+) is required as a cofactor. In terms of tissue distribution, expressed by the venom gland.

The protein resides in the secreted. It catalyses the reaction an N-(acyl)-sphingosylphosphocholine = an N-(acyl)-sphingosyl-1,3-cyclic phosphate + choline. The enzyme catalyses an N-(acyl)-sphingosylphosphoethanolamine = an N-(acyl)-sphingosyl-1,3-cyclic phosphate + ethanolamine. The catalysed reaction is a 1-acyl-sn-glycero-3-phosphocholine = a 1-acyl-sn-glycero-2,3-cyclic phosphate + choline. It carries out the reaction a 1-acyl-sn-glycero-3-phosphoethanolamine = a 1-acyl-sn-glycero-2,3-cyclic phosphate + ethanolamine. Dermonecrotic toxins cleave the phosphodiester linkage between the phosphate and headgroup of certain phospholipids (sphingolipid and lysolipid substrates), forming an alcohol (often choline) and a cyclic phosphate. This toxin acts on sphingomyelin (SM). It may also act on ceramide phosphoethanolamine (CPE), lysophosphatidylcholine (LPC) and lysophosphatidylethanolamine (LPE), but not on lysophosphatidylserine (LPS), and lysophosphatidylglycerol (LPG). It acts by transphosphatidylation, releasing exclusively cyclic phosphate products as second products. Induces dermonecrosis, hemolysis, increased vascular permeability, edema, inflammatory response, and platelet aggregation. The chain is Dermonecrotic toxin LhSicTox-alphaIA2biii from Loxosceles hirsuta (Recluse spider).